A 91-amino-acid polypeptide reads, in one-letter code: Large ribosomal subunit protein uL23c (91 aa).

It belongs to the universal ribosomal protein uL23 family. In terms of assembly, part of the 50S ribosomal subunit.

Its subcellular location is the plastid. It is found in the chloroplast. Binds to 23S rRNA. The chain is Large ribosomal subunit protein uL23c (rpl23) from Marchantia polymorpha (Common liverwort).